The following is a 347-amino-acid chain: Phenylalanine--tRNA ligase alpha subunit (347 aa).

Glu265 provides a ligand contact to Mg(2+).

This sequence belongs to the class-II aminoacyl-tRNA synthetase family. Phe-tRNA synthetase alpha subunit type 1 subfamily. As to quaternary structure, tetramer of two alpha and two beta subunits. Requires Mg(2+) as cofactor.

The protein resides in the cytoplasm. It carries out the reaction tRNA(Phe) + L-phenylalanine + ATP = L-phenylalanyl-tRNA(Phe) + AMP + diphosphate + H(+). The polypeptide is Phenylalanine--tRNA ligase alpha subunit (Wolbachia pipientis subsp. Culex pipiens (strain wPip)).